Here is a 686-residue protein sequence, read N- to C-terminus: Phosphomethylpyrimidine synthase (686 aa).

Residues Asn-235, Met-264, Tyr-293, His-329, 349-351 (SRG), 390-393 (DGMR), and Glu-429 each bind substrate. Residue His-433 coordinates Zn(2+). Residue Tyr-456 participates in substrate binding. A Zn(2+)-binding site is contributed by His-497. [4Fe-4S] cluster is bound by residues Cys-577, Cys-580, and Cys-585. The disordered stretch occupies residues 659–686 (IDSSGINDNKNDQQDASVVRVPSLEIEG).

Belongs to the ThiC family. As to quaternary structure, homodimer. [4Fe-4S] cluster is required as a cofactor.

The catalysed reaction is 5-amino-1-(5-phospho-beta-D-ribosyl)imidazole + S-adenosyl-L-methionine = 4-amino-2-methyl-5-(phosphooxymethyl)pyrimidine + CO + 5'-deoxyadenosine + formate + L-methionine + 3 H(+). It participates in cofactor biosynthesis; thiamine diphosphate biosynthesis. Functionally, catalyzes the synthesis of the hydroxymethylpyrimidine phosphate (HMP-P) moiety of thiamine from aminoimidazole ribotide (AIR) in a radical S-adenosyl-L-methionine (SAM)-dependent reaction. This Shewanella denitrificans (strain OS217 / ATCC BAA-1090 / DSM 15013) protein is Phosphomethylpyrimidine synthase.